Consider the following 726-residue polypeptide: Catalase-peroxidase (726 aa).

A cross-link (tryptophyl-tyrosyl-methioninium (Trp-Tyr) (with M-242)) is located at residues 93 to 216; it reads WHSAGTYRVH…LAAVQMGLIY (124 aa). The Proton acceptor role is filled by His-94. A cross-link (tryptophyl-tyrosyl-methioninium (Tyr-Met) (with W-93)) is located at residues 216–242; that stretch reads YVNPEGPNGNPDPVAAAVDIRETFTRM. His-257 contacts heme b. Residues 471–490 are disordered; sequence GSDKRGGANGARIRLSPQKD.

The protein belongs to the peroxidase family. Peroxidase/catalase subfamily. Homodimer or homotetramer. Requires heme b as cofactor. Formation of the three residue Trp-Tyr-Met cross-link is important for the catalase, but not the peroxidase activity of the enzyme.

It carries out the reaction H2O2 + AH2 = A + 2 H2O. The enzyme catalyses 2 H2O2 = O2 + 2 H2O. Bifunctional enzyme with both catalase and broad-spectrum peroxidase activity. The sequence is that of Catalase-peroxidase from Methylacidiphilum infernorum (isolate V4) (Methylokorus infernorum (strain V4)).